The following is an 891-amino-acid chain: MATQIDASSEAAAATAAAQHTPMMQQYLRIKSEHPDTLVFYRMGDFYELFFEDAEKAARLLDLTLTQRGASAGTPIKMAGVPHHAVEQYLAKLVKFGESAAICEQIGDPATSKGPVERKVVRVVTPGTLTDAALLSDKSDVFLLALCVGHNKRGVASNIGLAWLNLASGALRLAELAPDQLGAALERIRPAEILAADGTIESVPAGMGAITRVPAWHFDIASGTQRLCDQLEVASLDGFGAQALTSANGAAGALLIYAAATQGQQLRHVRSLKVENESEYIGLDPSTRRNLELTETLRGTESPTLYSLLDTCCTAMGSRLLRHWLHHPPRASVAAQARHQAIGALLDAPPNAGLDSLRSALRQIADVERITGRLALLSARPRDLSSLRDTFAALPALRERVAEIASNAAALGRLEAALEPPPGCLDLLTRAIAAEPAAMVRDGGVIARGYDAELDELRDISENCGQFLIDLETRERARTGISNLRVEYNKVHGFYIEVTRGQTDKVPDDYRRRQTLKNAERYITPELKTFEDKALSAQERALARERALYDGVLQALLPHIEGCQRVASGLAELDLLAAFAERARTLDWVAPEFTDEIGIEIDQGRHPVVEAQVEQFIANDCALNPERKLLLITGPNMGGKSTFMRQTALIALMAYVGSYVPAKAARFGPIDRIFTRIGAADDLAGGRSTFMVEMTEAAAILNDATPHSLVLMDEIGRGTSTFDGLALAWAIARHLLSHNRCYTLFATHYFELTQLPAEFPQAANVHLSAVEHGHGIVFLHAVEEGPANQSYGLQVAQLAGVPAPVIRAARKHLAHLEQQSAAQATPQLDLFAAPPVVDEPECNEPPAAATPHPALERLLELDPDDLKPRDALDLLYELHTLARSGPADAQR.

Residue 634 to 641 participates in ATP binding; that stretch reads GPNMGGKS.

This sequence belongs to the DNA mismatch repair MutS family.

In terms of biological role, this protein is involved in the repair of mismatches in DNA. It is possible that it carries out the mismatch recognition step. This protein has a weak ATPase activity. This chain is DNA mismatch repair protein MutS, found in Burkholderia mallei (strain NCTC 10247).